The sequence spans 274 residues: MAIHLYKTSTPSTRNGAVDSQVKSNPRNNLICGQHHCGKGRNARGIITVRHRGGGHKRLYRKIDFRRNAKDIYGRIVTIEYDPNRNAYICLIHYGDGEKRYILHPRGAIIGDTIVSGTEVPIKMGNALPLTDMPLGTAIHNIEITLGKGGQLARAAGAVAKLIAKEGKSATLKLPSGEVRLISKNCSATVGQVGNVGVNQKSLGRAGSKCWLGKRPVVRGVVMNPVDHPHGGGEGRAPIGRKKPVTPWGYPALGRRTRKRKKYSETLILRRRSK.

Disordered stretches follow at residues 1 to 21 and 225 to 254; these read MAIH…VDSQ and PVDH…PALG.

It belongs to the universal ribosomal protein uL2 family. As to quaternary structure, part of the 50S ribosomal subunit.

The protein resides in the plastid. It is found in the chloroplast. This chain is Large ribosomal subunit protein uL2cz/uL2cy (rpl2-A), found in Draba nemorosa (Woodland whitlowgrass).